A 245-amino-acid chain; its full sequence is Flavin-dependent thymidylate synthase (245 aa).

The region spanning 6–220 is the ThyX domain; it reads PRVELLAHTP…PELFAHAGAK (215 aa). FAD contacts are provided by residues Ser-65, 89–91, and Gln-97; that span reads RHR. DUMP is bound by residues 86-89, 97-101, and Arg-159; these read QLVR and QQSQR. The ThyX motif signature appears at 89–99; the sequence is RHRIASFSQQS. FAD is bound by residues 175 to 177 and His-181; that span reads NCR. Arg-186 serves as a coordination point for dUMP. Catalysis depends on Arg-186, which acts as the Involved in ionization of N3 of dUMP, leading to its activation.

It belongs to the thymidylate synthase ThyX family. Homotetramer. FAD is required as a cofactor.

It carries out the reaction dUMP + (6R)-5,10-methylene-5,6,7,8-tetrahydrofolate + NADPH + H(+) = dTMP + (6S)-5,6,7,8-tetrahydrofolate + NADP(+). The protein operates within pyrimidine metabolism; dTTP biosynthesis. In terms of biological role, catalyzes the reductive methylation of 2'-deoxyuridine-5'-monophosphate (dUMP) to 2'-deoxythymidine-5'-monophosphate (dTMP) while utilizing 5,10-methylenetetrahydrofolate (mTHF) as the methyl donor, and NADPH and FADH(2) as the reductant. This chain is Flavin-dependent thymidylate synthase, found in Nitratidesulfovibrio vulgaris (strain ATCC 29579 / DSM 644 / CCUG 34227 / NCIMB 8303 / VKM B-1760 / Hildenborough) (Desulfovibrio vulgaris).